A 1673-amino-acid polypeptide reads, in one-letter code: Leucine-rich repeat- and IQ domain-containing protein 1 (1673 aa).

2 disordered regions span residues 22 to 48 and 189 to 208; these read ISISSLENDEVENDSVSDTQSDSSDTD and LEEKDKETLEAQNEREKRTF. Residues 34-59 form an LRR 1 repeat; that stretch reads NDSVSDTQSDSSDTDLLELPESVLHY. Residues 216–239 form an LRR 2 repeat; it reads QCWMRQFEVEKKHLEDLQKQDQDK. The 30-residue stretch at 291 to 320 folds into the IQ 1 domain; the sequence is RYDAAVKIQATYRASVTYRKYSPIIKEQME. The disordered stretch occupies residues 324 to 374; sequence RRAQELKEKEAKIRQKEEEKRRRLEEEQRVEEEKKKKMLEERRRREREYEE. Over residues 326–374 the composition is skewed to basic and acidic residues; sequence AQELKEKEAKIRQKEEEKRRRLEEEQRVEEEKKKKMLEERRRREREYEE. Residues 491-516 form an LRR 3 repeat; that stretch reads LPKLKINENLSKNQCSEQPSDQEFNA. Disordered regions lie at residues 544 to 658 and 679 to 702; these read ESDT…EEIP and EGEADLQDSASGKLAPSEEAGSHS. Composition is skewed to basic and acidic residues over residues 549 to 567 and 588 to 602; these read TEEHVEHVREEKVGQETEK and EETREGLAEEIEIKE. Residues 603–629 show a composition bias toward polar residues; that stretch reads MTQQGGPSDENNSSPISMQKSLPSLTP. Residues 641–665 form an LRR 4 repeat; that stretch reads LEEDQETDLKSERIEEIPEEGVLSC. Basic and acidic residues predominate over residues 647–656; sequence TDLKSERIEE. 11 LRR repeats span residues 830–852, 853–873, 874–894, 895–919, 921–939, 940–961, 962–983, 984–1005, 1007–1029, 1030–1054, and 1067–1090; these read CSNLQILSLRRCGLTSLQGLSHC, TRLKYIDAQENHIEAISCENL, ENLSVVLLNNNLLTSIHGFDG, CTNLQSLELSHNKITRISGLESLKY, QELTVDHNQLISTKGLCEA, PTIVYLDCSHNHLTGIDGIGNC, GLLQIIKLQGNYLREPPSLRNH, VLLRELHLDDNSISSVEGLSSC, LPLLQYLSISQNSLATIVPLFHL, VSLEKLDVSNNCLSDLTNVMCWFNA, and PVLQEINWRDSILKTLPALRVLNG. Disordered stretches follow at residues 1163 to 1230 and 1308 to 1330; these read AHEQ…HCEE and PTTTEPLQDPLINNQTTSNEERR. Polar residues-rich tracts occupy residues 1168–1226 and 1308–1325; these read DVNT…PSTS and PTTTEPLQDPLINNQTTS. IQ domains lie at 1280 to 1309 and 1340 to 1369; these read PTKAAMVIQAQWRSYIAHRQINCSAEMHPT and REKAALHIQAVWKGFILRKKLATARKAIKD. An LRR 16 repeat occupies 1378 to 1405; the sequence is EIDLEDFEFDEDALEKDWPALDSTGFPS.

In Mus musculus (Mouse), this protein is Leucine-rich repeat- and IQ domain-containing protein 1 (Lrriq1).